Reading from the N-terminus, the 365-residue chain is Phospho-N-acetylmuramoyl-pentapeptide-transferase (365 aa).

10 consecutive transmembrane segments (helical) span residues Y22–G42, T74–L94, T95–F115, Y133–L153, S168–G188, G201–E221, L240–F260, V267–M287, L292–V312, and K342–I362.

Belongs to the glycosyltransferase 4 family. MraY subfamily. Requires Mg(2+) as cofactor.

Its subcellular location is the cell inner membrane. It catalyses the reaction UDP-N-acetyl-alpha-D-muramoyl-L-alanyl-gamma-D-glutamyl-meso-2,6-diaminopimeloyl-D-alanyl-D-alanine + di-trans,octa-cis-undecaprenyl phosphate = di-trans,octa-cis-undecaprenyl diphospho-N-acetyl-alpha-D-muramoyl-L-alanyl-D-glutamyl-meso-2,6-diaminopimeloyl-D-alanyl-D-alanine + UMP. It participates in cell wall biogenesis; peptidoglycan biosynthesis. In terms of biological role, catalyzes the initial step of the lipid cycle reactions in the biosynthesis of the cell wall peptidoglycan: transfers peptidoglycan precursor phospho-MurNAc-pentapeptide from UDP-MurNAc-pentapeptide onto the lipid carrier undecaprenyl phosphate, yielding undecaprenyl-pyrophosphoryl-MurNAc-pentapeptide, known as lipid I. The chain is Phospho-N-acetylmuramoyl-pentapeptide-transferase from Francisella tularensis subsp. tularensis (strain FSC 198).